Consider the following 63-residue polypeptide: Small ribosomal subunit protein bS21 (63 aa).

The span at 40 to 52 (KPSVKRKLKSEAA) shows a compositional bias: basic and acidic residues. A disordered region spans residues 40–63 (KPSVKRKLKSEAARKRKNKRGRRY). Residues 53-63 (RKRKNKRGRRY) are compositionally biased toward basic residues.

It belongs to the bacterial ribosomal protein bS21 family.

The sequence is that of Small ribosomal subunit protein bS21 from Limosilactobacillus reuteri (strain DSM 20016) (Lactobacillus reuteri).